Consider the following 457-residue polypeptide: Putative methyltransferase MT1451 (457 aa).

Residues 276 to 282 (CAGPGGK), Glu-301, Asp-325, and Asp-341 contribute to the S-adenosyl-L-methionine site. Residue Cys-394 is the Nucleophile of the active site.

It belongs to the class I-like SAM-binding methyltransferase superfamily. RsmB/NOP family.

May act as RNA methyltransferase. The sequence is that of Putative methyltransferase MT1451 from Mycobacterium tuberculosis (strain CDC 1551 / Oshkosh).